The sequence spans 247 residues: Exosome complex component Rrp4 (247 aa).

In terms of domain architecture, S1 motif spans 70-143; that stretch reads GDTVIGLIED…INPILSIKGK (74 aa). The KH domain maps to 149-211; that stretch reads SSGIVIDIPP…EALVEAIQII (63 aa).

It belongs to the RRP4 family. In terms of assembly, component of the archaeal exosome complex. Forms a trimer of Rrp4 and/or Csl4 subunits. The trimer associates with a hexameric ring-like arrangement composed of 3 Rrp41-Rrp42 heterodimers.

Its subcellular location is the cytoplasm. Non-catalytic component of the exosome, which is a complex involved in RNA degradation. Increases the RNA binding and the efficiency of RNA degradation. Confers strong poly(A) specificity to the exosome. The polypeptide is Exosome complex component Rrp4 (Sulfurisphaera tokodaii (strain DSM 16993 / JCM 10545 / NBRC 100140 / 7) (Sulfolobus tokodaii)).